The primary structure comprises 154 residues: Catabolic 3-dehydroquinase (154 aa).

Residue Y25 is the Proton acceptor of the active site. 3 residues coordinate substrate: N79, H85, and D92. H105 functions as the Proton donor in the catalytic mechanism. Residues 106 to 107 and R116 each bind substrate; that span reads IS.

The protein belongs to the type-II 3-dehydroquinase family. As to quaternary structure, homododecamer. Adopts a ring-like structure, composed of an arrangement of two hexameric rings stacked on top of one another.

The catalysed reaction is 3-dehydroquinate = 3-dehydroshikimate + H2O. It participates in aromatic compound metabolism; 3,4-dihydroxybenzoate biosynthesis; 3,4-dihydroxybenzoate from 3-dehydroquinate: step 1/2. Is involved in the catabolism of quinate. Allows the utilization of quinate as carbon source via the beta-ketoadipate pathway. This is Catabolic 3-dehydroquinase from Sclerotinia sclerotiorum (strain ATCC 18683 / 1980 / Ss-1) (White mold).